We begin with the raw amino-acid sequence, 161 residues long: MPSFDIVSKVDMQEVDNAVNQAVKEIGQRYDFKGSKSEVTLEKDAIKILADDDFRLKAIVDILQSKFIKRGISPKALQYGKAETASGGMVRQIITVQQGISKEKGKEVVAVIKDTKLKVQGQIQDDQVRVTGKNRDDLQEAIRTLKGKDLGIELQFVNFRD.

This sequence belongs to the YajQ family.

Functionally, nucleotide-binding protein. This Geobacter metallireducens (strain ATCC 53774 / DSM 7210 / GS-15) protein is Nucleotide-binding protein Gmet_3206.